A 167-amino-acid polypeptide reads, in one-letter code: Small ribosomal subunit protein uS5 (167 aa).

Residues 12–75 (LQEKLIAVNR…EKARRNMVTI (64 aa)) form the S5 DRBM domain.

The protein belongs to the universal ribosomal protein uS5 family. In terms of assembly, part of the 30S ribosomal subunit. Contacts proteins S4 and S8.

Its function is as follows. With S4 and S12 plays an important role in translational accuracy. Located at the back of the 30S subunit body where it stabilizes the conformation of the head with respect to the body. This Vibrio vulnificus (strain CMCP6) protein is Small ribosomal subunit protein uS5.